Here is a 115-residue protein sequence, read N- to C-terminus: Protein VCF2 (115 aa).

Positions 1–12 are enriched in basic residues; that stretch reads MGGCPVRKRRRN. The disordered stretch occupies residues 1-70; sequence MGGCPVRKRR…GPEGNLNQIV (70 aa). Positions 33–44 are enriched in polar residues; sequence FQDSQDTEFSWS.

It belongs to the VCF family.

The protein is Protein VCF2 of Homo sapiens (Human).